The primary structure comprises 364 residues: Histidinol-phosphate aminotransferase 1 (364 aa).

Residue lysine 211 is modified to N6-(pyridoxal phosphate)lysine.

It belongs to the class-II pyridoxal-phosphate-dependent aminotransferase family. Histidinol-phosphate aminotransferase subfamily. As to quaternary structure, homodimer. It depends on pyridoxal 5'-phosphate as a cofactor.

The enzyme catalyses L-histidinol phosphate + 2-oxoglutarate = 3-(imidazol-4-yl)-2-oxopropyl phosphate + L-glutamate. The protein operates within amino-acid biosynthesis; L-histidine biosynthesis; L-histidine from 5-phospho-alpha-D-ribose 1-diphosphate: step 7/9. The chain is Histidinol-phosphate aminotransferase 1 from Legionella pneumophila (strain Lens).